The sequence spans 347 residues: Lipoyl synthase (347 aa).

C55, C60, C66, C81, C85, C88, and S292 together coordinate [4Fe-4S] cluster. In terms of domain architecture, Radical SAM core spans 67–281; it reads WEDREASFLI…SEAAYDMGFP (215 aa).

It belongs to the radical SAM superfamily. Lipoyl synthase family. [4Fe-4S] cluster is required as a cofactor.

Its subcellular location is the cytoplasm. The enzyme catalyses [[Fe-S] cluster scaffold protein carrying a second [4Fe-4S](2+) cluster] + N(6)-octanoyl-L-lysyl-[protein] + 2 oxidized [2Fe-2S]-[ferredoxin] + 2 S-adenosyl-L-methionine + 4 H(+) = [[Fe-S] cluster scaffold protein] + N(6)-[(R)-dihydrolipoyl]-L-lysyl-[protein] + 4 Fe(3+) + 2 hydrogen sulfide + 2 5'-deoxyadenosine + 2 L-methionine + 2 reduced [2Fe-2S]-[ferredoxin]. It participates in protein modification; protein lipoylation via endogenous pathway; protein N(6)-(lipoyl)lysine from octanoyl-[acyl-carrier-protein]: step 2/2. Its function is as follows. Catalyzes the radical-mediated insertion of two sulfur atoms into the C-6 and C-8 positions of the octanoyl moiety bound to the lipoyl domains of lipoate-dependent enzymes, thereby converting the octanoylated domains into lipoylated derivatives. The protein is Lipoyl synthase of Corynebacterium urealyticum (strain ATCC 43042 / DSM 7109).